A 116-amino-acid chain; its full sequence is NADH-ubiquinone oxidoreductase chain 3 (116 aa).

A run of 3 helical transmembrane segments spans residues Leu-3–Phe-23, Phe-56–Leu-76, and Pro-85–Tyr-105.

This sequence belongs to the complex I subunit 3 family.

It is found in the mitochondrion membrane. The catalysed reaction is a ubiquinone + NADH + 5 H(+)(in) = a ubiquinol + NAD(+) + 4 H(+)(out). Core subunit of the mitochondrial membrane respiratory chain NADH dehydrogenase (Complex I) that is believed to belong to the minimal assembly required for catalysis. Complex I functions in the transfer of electrons from NADH to the respiratory chain. The immediate electron acceptor for the enzyme is believed to be ubiquinone. The chain is NADH-ubiquinone oxidoreductase chain 3 (MT-ND3) from Salmo salar (Atlantic salmon).